Reading from the N-terminus, the 416-residue chain is Tyrosine--tRNA ligase (416 aa).

Residue tyrosine 34 coordinates L-tyrosine. Positions 39-48 (PTGDSLHIGH) match the 'HIGH' region motif. Residues tyrosine 165 and glutamine 169 each contribute to the L-tyrosine site. A 'KMSKS' region motif is present at residues 227–231 (KFGKT). Residue lysine 230 participates in ATP binding. An S4 RNA-binding domain is found at 349–416 (ENIIIWLTDN…KKHYYLARVK (68 aa)).

Belongs to the class-I aminoacyl-tRNA synthetase family. TyrS type 1 subfamily. Homodimer.

The protein resides in the cytoplasm. It carries out the reaction tRNA(Tyr) + L-tyrosine + ATP = L-tyrosyl-tRNA(Tyr) + AMP + diphosphate + H(+). Its function is as follows. Catalyzes the attachment of tyrosine to tRNA(Tyr) in a two-step reaction: tyrosine is first activated by ATP to form Tyr-AMP and then transferred to the acceptor end of tRNA(Tyr). The protein is Tyrosine--tRNA ligase of Limosilactobacillus reuteri (strain DSM 20016) (Lactobacillus reuteri).